The primary structure comprises 497 residues: RNA-splicing ligase RtcB homolog (497 aa).

The Mn(2+) site is built by Asp-111, Cys-114, His-219, His-251, and His-345. 218 to 222 (NHYAE) lines the GMP pocket. Residues 345–346 (HN), 394–397 (GGTM), Ser-401, 420–423 (HGAG), and Lys-496 contribute to the GMP site. His-420 serves as the catalytic GMP-histidine intermediate.

Belongs to the RtcB family. In terms of assembly, catalytic component of the tRNA-splicing ligase complex. It depends on Mn(2+) as a cofactor.

The catalysed reaction is a 3'-end 3'-phospho-ribonucleotide-RNA + a 5'-end dephospho-ribonucleoside-RNA + GTP = a ribonucleotidyl-ribonucleotide-RNA + GMP + diphosphate. It catalyses the reaction a 3'-end 2',3'-cyclophospho-ribonucleotide-RNA + a 5'-end dephospho-ribonucleoside-RNA + GTP + H2O = a ribonucleotidyl-ribonucleotide-RNA + GMP + diphosphate + H(+). Its function is as follows. Catalytic subunit of the tRNA-splicing ligase complex that acts by directly joining spliced tRNA halves to mature-sized tRNAs by incorporating the precursor-derived splice junction phosphate into the mature tRNA as a canonical 3',5'-phosphodiester. May act as an RNA ligase with broad substrate specificity, and may function toward other RNAs. In Monosiga brevicollis (Choanoflagellate), this protein is RNA-splicing ligase RtcB homolog.